The primary structure comprises 276 residues: Tyrosinase (276 aa).

Cu cation contacts are provided by His38, His56, His66, His193, His197, and His219.

This sequence belongs to the tyrosinase family. Requires Cu(2+) as cofactor.

It carries out the reaction 2 L-dopa + O2 = 2 L-dopaquinone + 2 H2O. It catalyses the reaction L-tyrosine + O2 = L-dopaquinone + H2O. In terms of biological role, this is a copper-containing oxidase that functions in the formation of pigments such as melanins and other polyphenolic compounds. The sequence is that of Tyrosinase (melC2) from Streptomyces galbus.